The sequence spans 430 residues: Tyrosine--tRNA ligase (430 aa).

Residue Tyr-32 participates in L-tyrosine binding. The 'HIGH' region motif lies at 37 to 46; sequence PTADSLHIGH. L-tyrosine contacts are provided by Tyr-172 and Gln-176. The 'KMSKS' region signature appears at 232 to 236; sequence KFGKT. Lys-235 contacts ATP. Positions 362 to 430 constitute an S4 RNA-binding domain; sequence ISLVDLLADA…KKSYYLIIVE (69 aa).

This sequence belongs to the class-I aminoacyl-tRNA synthetase family. TyrS type 1 subfamily. As to quaternary structure, homodimer.

Its subcellular location is the cytoplasm. It catalyses the reaction tRNA(Tyr) + L-tyrosine + ATP = L-tyrosyl-tRNA(Tyr) + AMP + diphosphate + H(+). Functionally, catalyzes the attachment of tyrosine to tRNA(Tyr) in a two-step reaction: tyrosine is first activated by ATP to form Tyr-AMP and then transferred to the acceptor end of tRNA(Tyr). The chain is Tyrosine--tRNA ligase from Porphyromonas gingivalis (strain ATCC 33277 / DSM 20709 / CIP 103683 / JCM 12257 / NCTC 11834 / 2561).